Here is a 119-residue protein sequence, read N- to C-terminus: Developmental pluripotency-associated protein 5B/5C (119 aa).

The 63-residue stretch at 24–86 folds into the KH; atypical domain; sequence PEVFQVQSLV…SIKVRAKWLL (63 aa).

The protein belongs to the KHDC1 family.

The protein localises to the cytoplasm. Functionally, involved in the maintenance of embryonic stem (ES) cell pluripotency. Dispensable for self-renewal of pluripotent ES cells and establishment of germ cells. Associates with specific target mRNAs. The protein is Developmental pluripotency-associated protein 5B/5C of Mus musculus (Mouse).